The following is a 187-amino-acid chain: Signal peptidase complex catalytic subunit SEC11 (187 aa).

At 1 to 14 the chain is on the cytoplasmic side; sequence MLSSLSPYMANPRN. A helical; Signal-anchor for type II membrane protein membrane pass occupies residues 15-33; it reads TLSQVLNFGLVLSSAFMVW. Topologically, residues 34–187 are lumenal; that stretch reads KTLSVITNST…MGLMVMLQRE (154 aa). Asn-41 carries N-linked (GlcNAc...) asparagine glycosylation. Catalysis depends on charge relay system residues Ser-53 and His-92. A glycan (N-linked (GlcNAc...) asparagine) is linked at Asn-125. Asp-129 functions as the Charge relay system in the catalytic mechanism. The segment at 173-184 is C-terminal short (CTS) helix; sequence VLLGFMGLMVML.

Belongs to the peptidase S26B family. As to quaternary structure, component of the signal peptidase complex (SPC) composed of a catalytic subunit SEC11 and three accessory subunits SPC1, SPC2 and SPC3. The complex induces a local thinning of the ER membrane which is used to measure the length of the signal peptide (SP) h-region of protein substrates. This ensures the selectivity of the complex towards h-regions shorter than 18-20 amino acids. SPC associates with the translocon complex.

The protein resides in the endoplasmic reticulum membrane. It catalyses the reaction Cleavage of hydrophobic, N-terminal signal or leader sequences from secreted and periplasmic proteins.. Functionally, catalytic component of the signal peptidase complex (SPC) which catalyzes the cleavage of N-terminal signal sequences from nascent proteins as they are translocated into the lumen of the endoplasmic reticulum. Specifically cleaves N-terminal signal peptides that contain a hydrophobic alpha-helix (h-region) shorter than 18-20 amino acids. The chain is Signal peptidase complex catalytic subunit SEC11 (SEC11) from Ajellomyces capsulatus (strain H88) (Darling's disease fungus).